The sequence spans 94 residues: Preprofallaxidin-9 (94 aa).

The first 22 residues, 1-22 (MASLKKSLFLVLFLGLVSLSIC), serve as a signal peptide directing secretion. The propeptide occupies 23–46 (EEEKRENEEDAEDENHEEESEEKR). The segment at 27 to 46 (RENEEDAEDENHEEESEEKR) is disordered. The span at 30-42 (EEDAEDENHEEES) shows a compositional bias: acidic residues. L62 carries the post-translational modification Leucine amide. Residues 66–70 (SEEKR) constitute a propeptide that is removed on maturation. M75 is modified (methionine amide). A propeptide spanning residues 79–83 (SEEKR) is cleaved from the precursor. M88 carries the post-translational modification Methionine amide. Positions 92 to 94 (SEE) are excised as a propeptide.

Belongs to the frog skin active peptide (FSAP) family. Brevinin subfamily. As to expression, expressed by the skin glands.

It localises to the secreted. Its function is as follows. Fallaxidin-1.3 shows no antibacterial activity against Gram-positive or Gram-negative bacteria. Does not inhibit the formation of NO by neuronal nitric oxide synthase. Has no effect on splenocyte proliferation or smooth muscle contraction. Functionally, fallaxidin-3.2 shows antibacterial activity against the Gram-positive bacteria E.faecalis (MIC=100 uM) and L.lactis (MIC=500 uM). No antibacterial activity against the Gram-positive bacteria B.cereus, L.innocua, M.luteus, S.epidermidis, S.uberis and S.aureus, or the Gram-negative bacteria E.cloacae and E.coli. This chain is Preprofallaxidin-9, found in Litoria fallax (Eastern dwarf tree frog).